The sequence spans 247 residues: 14-3-3 protein gamma (247 aa).

N-acetylmethionine; in 14-3-3 protein gamma; alternate; partial is present on methionine 1. Valine 2 bears the N-acetylvaline; in 14-3-3 protein gamma, N-terminally processed; partial mark. At valine 2 the chain carries N-acetylvaline; partial. The required for interaction with SPATA18/MIEAP (isoform 2) but dispensable for binding to SPATA18/MIEAP (isoform 1) stretch occupies residues 2-166; that stretch reads VDREQLVQKA…AHEISKEHMQ (165 aa). Residues 2 to 247 form an interaction with SPATA18/MIEAP region; that stretch reads VDREQLVQKA…QDDDGGEGNN (246 aa). Serine 71 is modified (phosphoserine). A Phosphotyrosine modification is found at tyrosine 133. The residue at position 145 (threonine 145) is a Phosphothreonine. Serine 215 carries the phosphoserine modification. Phosphothreonine is present on threonine 234. At serine 235 the chain carries Phosphoserine.

It belongs to the 14-3-3 family. As to quaternary structure, homodimer. Part of a complex that contains DSG3, PKP1, YAP1 and YWHAG; the complex is required for localization of DSG3 and YAP1 to the cell membrane in keratinocytes. Interacts with SAMSN1. Interacts with RAF1, SSH1 and CRTC2/TORC2. Interacts with ABL1 (phosphorylated form); the interaction retains it in the cytoplasm. Interacts with GAB2. Interacts with MDM4 (phosphorylated); negatively regulates MDM4 activity toward TP53. Interacts with PKA-phosphorylated AANAT and SIRT2. Interacts with the 'Thr-369' phosphorylated form of DAPK2. Interacts with PI4KB, TBC1D22A and TBC1D22B. Interacts with SLITRK1. Interacts with LRRK2; this interaction is dependent on LRRK2 phosphorylation. Interacts with MARK2 and MARK3. Interacts with MEFV. Interacts with ENDOG, TSC2 and PIK3C3; interaction with ENDOG weakens its interaction with TSC2 and PIK3C3. Interacts with (phosphorylated) WDR24. Interacts with BEST1; this interaction promotes L-glutamate channel activity leading to the positive regulation of NMDA glutamate receptor activity through the L-glutamate secretion. Interacts with PKP1 (when phosphorylated); the interaction results in translocation of PKP1 to the cytoplasm and loss of intercellular adhesion in keratinocytes. Interacts with SPATA18/MIEAP (isoforms 1 and 2); a protein that also plays a role in MALM. Phosphorylated by various PKC isozymes. In terms of tissue distribution, highly expressed in brain, skeletal muscle, and heart.

Its subcellular location is the cytoplasm. The protein localises to the cytosol. The protein resides in the mitochondrion matrix. Functionally, adapter protein implicated in the regulation of a large spectrum of both general and specialized signaling pathways. Binds to a large number of partners, usually by recognition of a phosphoserine or phosphothreonine motif. Binding generally results in the modulation of the activity of the binding partner. Promotes inactivation of WDR24 component of the GATOR2 complex by binding to phosphorylated WDR24. Participates in the positive regulation of NMDA glutamate receptor activity by promoting the L-glutamate secretion through interaction with BEST1. Reduces keratinocyte intercellular adhesion, via interacting with PKP1 and sequestering it in the cytoplasm, thereby reducing its incorporation into desmosomes. Plays a role in mitochondrial protein catabolic process (also named MALM) that promotes the degradation of damaged proteins inside mitochondria. The polypeptide is 14-3-3 protein gamma (Homo sapiens (Human)).